Here is a 1355-residue protein sequence, read N- to C-terminus: Patatin-like phospholipase domain-containing protein 6 (1355 aa).

The Lumenal segment spans residues 1–43 (MGTPSHELNTTSSGAEVIQKTLEEGLGRRICVAQPVPFVPQVL). N-linked (GlcNAc...) asparagine glycosylation is present at asparagine 9. A helical transmembrane segment spans residues 44–64 (GVMIGAGVAVLVTAVLILLVV). The Cytoplasmic portion of the chain corresponds to 65-1355 (RRLRVQKTPA…QETPSSVADA (1291 aa)). An a nucleoside 3',5'-cyclic phosphate-binding site is contributed by 179–306 (VLGHFEKPLF…VRVVQIIMVR (128 aa)). Serine 338 bears the Phosphoserine mark. The tract at residues 338–395 (SPGLPTRTSPVRGSKRVVSTSGTEDTSKETSGRPLDSIGAPLPGPAGDPVKPTSLEAP) is disordered. Over residues 343-361 (TRTSPVRGSKRVVSTSGTE) the composition is skewed to polar residues. Threonine 345 carries the phosphothreonine modification. A phosphoserine mark is found at serine 346, serine 356, and serine 405. Residues 492–614 (ELAK…VAAR) and 610–730 (TVAA…LSQK) each bind a nucleoside 3',5'-cyclic phosphate. In terms of domain architecture, PNPLA spans 961–1127 (LVLGGGGARG…INNLPADIAR (167 aa)). A GXGXXG motif is present at residues 965-970 (GGGARG). Positions 992–996 (GTSIG) match the GXSXG motif. The active-site Nucleophile is the serine 994. The active-site Proton acceptor is aspartate 1114. Positions 1114–1116 (DGG) match the DGA/G motif. The disordered stretch occupies residues 1286-1355 (SYVSDGCADG…QETPSSVADA (70 aa)). The segment covering 1293-1309 (ADGEESDCLTEYEEDAG) has biased composition (acidic residues).

Belongs to the NTE family. Glycosylated. As to expression, expressed in brain, testes and kidney (at protein level). Expressed ubiquitously in brain of young mice. Reaching adulthood, there is a most prominent expression in Purkinje cells, granule cells and pyramidal neurons of the hippocampus and some large neurons in the medulla oblongata, nucleus dentatus and pons.

The protein resides in the endoplasmic reticulum membrane. The catalysed reaction is a 1-acyl-sn-glycero-3-phosphocholine + H2O = sn-glycerol 3-phosphocholine + a fatty acid + H(+). It carries out the reaction 1-hexadecanoyl-sn-glycero-3-phosphocholine + H2O = sn-glycerol 3-phosphocholine + hexadecanoate + H(+). It catalyses the reaction 1-hexadecanoyl-sn-glycero-3-phosphate + H2O = sn-glycerol 3-phosphate + hexadecanoate + H(+). The enzyme catalyses 1-(9Z-octadecenoyl)-sn-glycero-3-phosphocholine + H2O = sn-glycerol 3-phosphocholine + (9Z)-octadecenoate + H(+). The catalysed reaction is 1-hexadecanoylglycerol + H2O = glycerol + hexadecanoate + H(+). It carries out the reaction 2-hexadecanoylglycerol + H2O = glycerol + hexadecanoate + H(+). It catalyses the reaction 1-(9Z-octadecenoyl)-glycerol + H2O = glycerol + (9Z)-octadecenoate + H(+). The enzyme catalyses 2-(9Z-octadecenoyl)-glycerol + H2O = glycerol + (9Z)-octadecenoate + H(+). The catalysed reaction is 2-(5Z,8Z,11Z,14Z-eicosatetraenoyl)-glycerol + H2O = glycerol + (5Z,8Z,11Z,14Z)-eicosatetraenoate + H(+). With respect to regulation, inhibited by a series a OPs such as mipafox (MPX), phenyl saligenin phosphate (PSP), phenyl dipentyl phosphinate (PDPP), diisopropyl fluorophosphate and paraoxon. Its function is as follows. Phospholipase B that deacylates intracellular phosphatidylcholine (PtdCho), generating glycerophosphocholine (GroPtdCho). This deacylation occurs at both sn-2 and sn-1 positions of PtdCho. Catalyzes the hydrolysis of several naturally occurring membrane-associated lipids. Hydrolyzes lysophospholipids and monoacylglycerols, preferring the 1-acyl to the 2-acyl isomer. Does not catalyze hydrolysis of di- or triacylglycerols or fatty acid amides. This chain is Patatin-like phospholipase domain-containing protein 6 (Pnpla6), found in Mus musculus (Mouse).